A 260-amino-acid chain; its full sequence is MIKEKDTPKNEVIIETENLNLFYTDFKALNKINMKILKNSITALIGPSGCGKSTFLRTLNRMNDLVEGIKIEGNVIYEGKNIYSNNFDILELRRKIGMVFQTPNPFLMSIYDNISYGPKIHGTKDKKKLDEIVEQSLKKSALWNEVKDKLHTNALSLSGGQQQRLCIARTLAIEPNVILMDEPTSALDPISTGKIEELIINLKESYTIIIVTHNMQQAGRISDRTAFFLNGCIEEESSTDELFFNPKNTKTEEYISGKFG.

An ABC transporter domain is found at 14–255 (IETENLNLFY…PKNTKTEEYI (242 aa)). Position 46–53 (46–53 (GPSGCGKS)) interacts with ATP.

The protein belongs to the ABC transporter superfamily. Phosphate importer (TC 3.A.1.7) family. The complex is composed of two ATP-binding proteins (PstB), two transmembrane proteins (PstC and PstA) and a solute-binding protein (PstS).

Its subcellular location is the cell inner membrane. The enzyme catalyses phosphate(out) + ATP + H2O = ADP + 2 phosphate(in) + H(+). Its function is as follows. Part of the ABC transporter complex PstSACB involved in phosphate import. Responsible for energy coupling to the transport system. The protein is Phosphate import ATP-binding protein PstB of Borreliella burgdorferi (strain ATCC 35210 / DSM 4680 / CIP 102532 / B31) (Borrelia burgdorferi).